A 715-amino-acid chain; its full sequence is Zinc finger protein 544 (715 aa).

A KRAB domain is found at 14–85 (VCFEDVAMAF…EQEAPRDWKA (72 aa)). Residues Lys-273 and Lys-289 each participate in a glycyl lysine isopeptide (Lys-Gly) (interchain with G-Cter in SUMO2) cross-link. The segment at 354–374 (SVCNQCGKSFSCCKLIHQRTH) adopts a C2H2-type 1; atypical zinc-finger fold. C2H2-type zinc fingers lie at residues 380–402 (FECTQCGKSFSQSYDLVIHQRTH), 408–430 (YECDLCGKSFTQRSKLITHQRIH), 436–458 (YQCIECRKSFRWNSNLIVHQRIH), 464–486 (YECTHCGKSFSQSYELVTHKRTH), 492–514 (FKCTQCGKSFSQKYDLVVHQRTH), 520–542 (YECNLCGKSFSQSSKLITHQRIH), 548–570 (YQCIECGKSFRWNSNLVIHQRIH), 576–598 (YDCTHCGKSFSQSYQLVAHKRTH), 604–626 (YECNECGKAFNRSTQLIRHLQIH), 632–654 (YKCNQCNKAFARSSYLVMHQRTH), 660–682 (FECSQCGKAFSGSSNLLSHHRIH), and 688–710 (YECSDCGKSFRQQSQLVVHRRTH). Residue Lys-534 forms a Glycyl lysine isopeptide (Lys-Gly) (interchain with G-Cter in SUMO2) linkage.

The protein belongs to the krueppel C2H2-type zinc-finger protein family.

It localises to the nucleus. May be involved in transcriptional regulation. This chain is Zinc finger protein 544 (ZNF544), found in Homo sapiens (Human).